A 489-amino-acid polypeptide reads, in one-letter code: MKIYPDLKQVQELAEKHKANKIPIYGVIPADMLTPSVAYLKLNQGKKYSFILESVTQGESVSRYSFIGSPYRILMANGKTDPLARLERELKEVKTAPVEGLPSFSGGAVGYVSYDCIKYFEPTTEMPLEDTLGLPEAMFFMTDDLVAFDHAYQTVKIISHVCIQQGRPIEEAYEAAVFKINMLKKKLESPEIPLPEQKKVHLGYEAKSNVGEDGYKAFVSNLKEHIFNGDIFQAVPSQRIARRTDLHPFNLYRHLRTVNPSPYMFYIHCDDFDIIGASPELLVKSEHGRIINHPIAGTVPRGKTKEEDEAYAKDLLASVKDRAEHVMLVDLARNDVSRVCDLDTTSVDKLMTIEKFSHVQHLVSQVSGVLRPDKTRFDAFRSIFPAGTVSGSPKVRAIQLVYGLEKEKRGIYAGAVGRWGYEDDNMDTCIAIRTMVYKDGTVYLQAGGGIVFDSDEQDEYVETLNKLRSNVTAIEETEKLYAEEENSSA.

L-tryptophan is bound by residues serine 54 and 262 to 264 (PYM). 297-298 (GT) provides a ligand contact to chorismate. Mg(2+) is bound at residue glutamate 324. 2 positions are modified to phosphoserine: serine 390 and serine 392. Residues tyrosine 412, arginine 433, 447-449 (GGG), and glycine 449 contribute to the chorismate site. Residue glutamate 462 coordinates Mg(2+). Residue serine 488 is modified to Phosphoserine.

The protein belongs to the anthranilate synthase component I family. Tetramer of two components I and two components II. Mg(2+) serves as cofactor.

The catalysed reaction is chorismate + L-glutamine = anthranilate + pyruvate + L-glutamate + H(+). It functions in the pathway amino-acid biosynthesis; L-tryptophan biosynthesis; L-tryptophan from chorismate: step 1/5. In Schizosaccharomyces pombe (strain 972 / ATCC 24843) (Fission yeast), this protein is Probable anthranilate synthase component 1 (trp3).